The sequence spans 298 residues: Probable protein phosphatase 2C 26 (298 aa).

The PPM-type phosphatase domain maps to Ser-48–Val-295. Mn(2+)-binding residues include Asp-82, Gly-83, Asp-213, and Asp-286.

This sequence belongs to the PP2C family. The cofactor is Mg(2+). Mn(2+) serves as cofactor.

The enzyme catalyses O-phospho-L-seryl-[protein] + H2O = L-seryl-[protein] + phosphate. The catalysed reaction is O-phospho-L-threonyl-[protein] + H2O = L-threonyl-[protein] + phosphate. This is Probable protein phosphatase 2C 26 from Arabidopsis thaliana (Mouse-ear cress).